The following is a 168-amino-acid chain: Cell division inhibitor SulA (168 aa).

The tract at residues 106 to 112 is ftsZ binding; sequence ALLTGNY. The interval 161-168 is lon protease binding; the sequence is KIHSYLYH.

Belongs to the SulA family. Interacts with FtsZ. In terms of processing, is rapidly cleaved and degraded by the Lon protease once DNA damage is repaired.

Its function is as follows. Component of the SOS system and an inhibitor of cell division. Accumulation of SulA causes rapid cessation of cell division and the appearance of long, non-septate filaments. In the presence of GTP, binds a polymerization-competent form of FtsZ in a 1:1 ratio, thus inhibiting FtsZ polymerization and therefore preventing it from participating in the assembly of the Z ring. This mechanism prevents the premature segregation of damaged DNA to daughter cells during cell division. The polypeptide is Cell division inhibitor SulA (Yersinia pseudotuberculosis serotype O:1b (strain IP 31758)).